A 483-amino-acid polypeptide reads, in one-letter code: Probable cytosol aminopeptidase (483 aa).

Mn(2+) is bound by residues lysine 252 and aspartate 257. Residue lysine 264 is part of the active site. The Mn(2+) site is built by aspartate 275, aspartate 334, and glutamate 336. Residue arginine 338 is part of the active site.

Belongs to the peptidase M17 family. Requires Mn(2+) as cofactor.

Its subcellular location is the cytoplasm. It catalyses the reaction Release of an N-terminal amino acid, Xaa-|-Yaa-, in which Xaa is preferably Leu, but may be other amino acids including Pro although not Arg or Lys, and Yaa may be Pro. Amino acid amides and methyl esters are also readily hydrolyzed, but rates on arylamides are exceedingly low.. The enzyme catalyses Release of an N-terminal amino acid, preferentially leucine, but not glutamic or aspartic acids.. Its function is as follows. Presumably involved in the processing and regular turnover of intracellular proteins. Catalyzes the removal of unsubstituted N-terminal amino acids from various peptides. The protein is Probable cytosol aminopeptidase of Legionella pneumophila (strain Paris).